A 460-amino-acid polypeptide reads, in one-letter code: Lipase member H (460 aa).

The N-terminal stretch at 1–24 (MLLRFYFNGLLFVGCLLSWGRSDT) is a signal peptide. 2 N-linked (GlcNAc...) asparagine glycosylation sites follow: Asn67 and Asn75. Residue Ser163 is the Nucleophile of the active site. The N-linked (GlcNAc...) asparagine glycan is linked to Asn177. The Charge relay system role is filled by Asp187. A disulfide bond links Cys242 and Cys255. His257 acts as the Charge relay system in catalysis. 2 disulfides stabilise this stretch: Cys279/Cys290 and Cys293/Cys301. N-linked (GlcNAc...) asparagine glycosylation occurs at Asn289. Residue Asn366 is glycosylated (N-linked (GlcNAc...) asparagine). Cys436 and Cys455 are disulfide-bonded.

The protein belongs to the AB hydrolase superfamily. Lipase family.

The protein resides in the secreted. The protein localises to the cell membrane. It catalyses the reaction 1-hexadecanoyl-2-(9Z-octadecenoyl)-sn-glycero-3-phosphate + H2O = 2-(9Z-octadecenoyl)-sn-glycero-3-phosphate + hexadecanoate + H(+). Hydrolyzes specifically phosphatidic acid (PA) to produce 2-acyl lysophosphatidic acid (LPA; a potent bioactive lipid mediator) and fatty acid. Does not hydrolyze other phospholipids, like phosphatidylserine (PS), phosphatidylcholine (PC) and phosphatidylethanolamine (PE) or triacylglycerol (TG). The sequence is that of Lipase member H (liph) from Xenopus tropicalis (Western clawed frog).